The primary structure comprises 277 residues: C2H2-type zinc-finger transcription factor (277 aa).

Disordered regions lie at residues 23–66 and 78–146; these read PTMN…AHPP and MNEP…TDSI. Polar residues predominate over residues 27 to 37; the sequence is EIETTDNTYPR. A C2H2-type; degenerate zinc finger spans residues 185 to 208; sequence HPCPDCGRVFTRSTARNFHRQSGT.

Belongs to the GLI C2H2-type zinc-finger protein family.

It is found in the nucleus. C2H2-type zinc-finger transcription factor that controls the expression of the nonribosomal peptide synthases inpA and inpB, as well as of the other inp cluster-associated genes. Also mediates the expression of the asperfuranone biosynthesis gene cluster by binding to the afoA promoter. Probably recognizes the 5'-CT/C/AAAAGGAT/AT/GG/CA-3' motif in the promoters of teget genes. In Emericella nidulans (strain FGSC A4 / ATCC 38163 / CBS 112.46 / NRRL 194 / M139) (Aspergillus nidulans), this protein is C2H2-type zinc-finger transcription factor.